Consider the following 1586-residue polypeptide: Pentafunctional AROM polypeptide (1586 aa).

The tract at residues 1–384 is 3-dehydroquinate synthase; it reads MSEPTKISIL…HEPKASVVSN (384 aa). Residues 44–46, 81–84, 114–116, and Asp-119 each bind NAD(+); these read DTN, ESSK, and GGV. Residue Arg-130 participates in 7-phospho-2-dehydro-3-deoxy-D-arabino-heptonate binding. Position 139–140 (139–140) interacts with NAD(+); that stretch reads TT. Residues Asp-146 and Lys-152 each contribute to the 7-phospho-2-dehydro-3-deoxy-D-arabino-heptonate site. Lys-161 serves as a coordination point for NAD(+). Asn-162 lines the 7-phospho-2-dehydro-3-deoxy-D-arabino-heptonate pocket. NAD(+) is bound by residues 179-182 and Asn-190; that span reads FLET. Residue Glu-194 participates in Zn(2+) binding. 7-phospho-2-dehydro-3-deoxy-D-arabino-heptonate-binding positions include 194–197 and Lys-250; that span reads EVIK. Residue Glu-260 is the Proton acceptor; for 3-dehydroquinate synthase activity of the active site. 7-phospho-2-dehydro-3-deoxy-D-arabino-heptonate contacts are provided by residues 264-268 and His-271; that span reads RNLLN. His-271 serves as a coordination point for Zn(2+). His-275 serves as the catalytic Proton acceptor; for 3-dehydroquinate synthase activity. His-287 and Lys-356 together coordinate 7-phospho-2-dehydro-3-deoxy-D-arabino-heptonate. His-287 is a binding site for Zn(2+). Residues 397–842 are EPSP synthase; sequence VHPGVPKSLN…WDALKQMFSV (446 aa). The active-site For EPSP synthase activity is the Cys-824. The segment at 864-1056 is shikimate kinase; it reads SASVFIIGMR…KKKKHSFFVS (193 aa). 871-878 contributes to the ATP binding site; the sequence is GMRGAGKT. Residues 1057-1277 form a 3-dehydroquinase region; it reads LTLPDVEPSG…AAPGQLSAAE (221 aa). His-1180 functions as the Proton acceptor; for 3-dehydroquinate dehydratase activity in the catalytic mechanism. Lys-1208 functions as the Schiff-base intermediate with substrate; for 3-dehydroquinate dehydratase activity in the catalytic mechanism. The interval 1290-1586 is shikimate dehydrogenase; it reads AQKFAIFGSP…SKHLDYFLSF (297 aa).

It in the N-terminal section; belongs to the sugar phosphate cyclases superfamily. Dehydroquinate synthase family. This sequence in the 2nd section; belongs to the EPSP synthase family. In the 3rd section; belongs to the shikimate kinase family. The protein in the 4th section; belongs to the type-I 3-dehydroquinase family. It in the C-terminal section; belongs to the shikimate dehydrogenase family. Homodimer. Zn(2+) serves as cofactor.

The protein localises to the cytoplasm. It catalyses the reaction 7-phospho-2-dehydro-3-deoxy-D-arabino-heptonate = 3-dehydroquinate + phosphate. The enzyme catalyses 3-dehydroquinate = 3-dehydroshikimate + H2O. It carries out the reaction shikimate + NADP(+) = 3-dehydroshikimate + NADPH + H(+). The catalysed reaction is shikimate + ATP = 3-phosphoshikimate + ADP + H(+). It catalyses the reaction 3-phosphoshikimate + phosphoenolpyruvate = 5-O-(1-carboxyvinyl)-3-phosphoshikimate + phosphate. It functions in the pathway metabolic intermediate biosynthesis; chorismate biosynthesis; chorismate from D-erythrose 4-phosphate and phosphoenolpyruvate: step 2/7. It participates in metabolic intermediate biosynthesis; chorismate biosynthesis; chorismate from D-erythrose 4-phosphate and phosphoenolpyruvate: step 3/7. Its pathway is metabolic intermediate biosynthesis; chorismate biosynthesis; chorismate from D-erythrose 4-phosphate and phosphoenolpyruvate: step 4/7. The protein operates within metabolic intermediate biosynthesis; chorismate biosynthesis; chorismate from D-erythrose 4-phosphate and phosphoenolpyruvate: step 5/7. It functions in the pathway metabolic intermediate biosynthesis; chorismate biosynthesis; chorismate from D-erythrose 4-phosphate and phosphoenolpyruvate: step 6/7. The AROM polypeptide catalyzes 5 consecutive enzymatic reactions in prechorismate polyaromatic amino acid biosynthesis. The polypeptide is Pentafunctional AROM polypeptide (Penicillium rubens (strain ATCC 28089 / DSM 1075 / NRRL 1951 / Wisconsin 54-1255) (Penicillium chrysogenum)).